A 692-amino-acid polypeptide reads, in one-letter code: Centrosomal protein of 83 kDa (692 aa).

Coiled coils occupy residues 32 to 625 (RCEH…SLIL) and 656 to 689 (HLQE…ELGS). At S689 the chain carries Phosphoserine.

Belongs to the CEP83 family. As to quaternary structure, interacts with CEP164 and IFT20.

It localises to the cytoplasm. Its subcellular location is the cytoskeleton. The protein localises to the microtubule organizing center. The protein resides in the centrosome. It is found in the centriole. Component of the distal appendage region of the centriole involved in the initiation of primary cilium assembly. May collaborate with IFT20 in the trafficking of ciliary membrane proteins from the Golgi complex to the cilium during the initiation of primary cilium assembly. In Mus musculus (Mouse), this protein is Centrosomal protein of 83 kDa (Cep83).